Reading from the N-terminus, the 198-residue chain is MDIILGIRVQDSVILASSKAVTRGISVLKDSDDKTRQLSPHTLMSFAGEAGDTVQFAEYIQANIQLYSIREDYELSPQAVSSFVRQELAKSIRSRRPYQVNVLIGGYDKKKNKPELYQIDYLGTKVELPYGAHGYSGFYTFSLLDHHYRPDMTTEEGLDLLKLCVQELEKRMPMDFKGVIVKIVDKDGIRQVDDFQAQ.

N-acetylmethionine is present on M1. Residue S76 is modified to Phosphoserine.

This sequence belongs to the peptidase T1B family. In terms of assembly, the 26S proteasome consists of a 20S proteasome core and two 19S regulatory subunits. The 20S proteasome core is composed of 28 subunits that are arranged in four stacked rings, resulting in a barrel-shaped structure. The two end rings are each formed by seven alpha subunits, and the two central rings are each formed by seven beta subunits. The catalytic chamber with the active sites is on the inside of the barrel.

It localises to the cytoplasm. It is found in the nucleus. Functionally, non-catalytic component of the proteasome which degrades poly-ubiquitinated proteins in the cytoplasm and in the nucleus. It is essential for the regulated turnover of proteins and for the removal of misfolded proteins. The proteasome is a multicatalytic proteinase complex that is characterized by its ability to cleave peptides with Arg, Phe, Tyr, Leu, and Glu adjacent to the leaving group at neutral or slightly basic pH. It has an ATP-dependent proteolytic activity. This subunit has a chymotrypsin-like activity. This Saccharomyces cerevisiae (strain ATCC 204508 / S288c) (Baker's yeast) protein is Proteasome subunit beta type-4 (PRE1).